The following is a 417-amino-acid chain: Probable serine incorporator (417 aa).

10 helical membrane-spanning segments follow: residues 25-45 (VYVV…YWTF), 69-89 (VVYR…LVMI), 104-124 (GYWP…FFIP), 131-151 (YTWI…VLLI), 180-200 (CVLS…MLVF), 208-228 (INQF…VLSI), 239-259 (SGLF…YSAI), 276-296 (KEST…YSAF), 339-359 (FFHF…TNWA), and 391-411 (VVSS…PILL).

This sequence belongs to the TDE1 family.

The protein localises to the endoplasmic reticulum membrane. Functionally, enhances the incorporation of serine into phosphatidylserine and sphingolipids. The chain is Probable serine incorporator (serinc) from Dictyostelium discoideum (Social amoeba).